Here is a 156-residue protein sequence, read N- to C-terminus: Calglandulin (156 aa).

4 EF-hand domains span residues 8–43 (EQITEYKGIFEMFDEEGNGLVKTDDLESLMSLIGIN), 44–79 (PTKRDLANMAKDVDKDKKGTFNCDGFLVLMGIYHEK), 82–117 (NQDEELRAAFKVFDKEHKGYIEWDTLKYVLMNAGEP), and 118–153 (LNEHEAELMMKEADKDGDGTIDYEEFVAMMTGESFK). Ca(2+) contacts are provided by Asp131, Asp133, Asp135, Thr137, and Glu142.

Belongs to the calmodulin family. Calglandulin subfamily. As to expression, expressed by the venom gland.

The protein resides in the cytoplasm. Functionally, may be involved in the cellular control mechanism of the secretion of toxins from the gland into the venom. The protein is Calglandulin of Hoplocephalus stephensii (Stephens's banded snake).